The following is a 507-amino-acid chain: Histidine ammonia-lyase (507 aa).

A cross-link (5-imidazolinone (Ala-Gly)) is located at residues 141-143 (ASG). A 2,3-didehydroalanine (Ser) modification is found at Ser142.

This sequence belongs to the PAL/histidase family. Post-translationally, contains an active site 4-methylidene-imidazol-5-one (MIO), which is formed autocatalytically by cyclization and dehydration of residues Ala-Ser-Gly.

It is found in the cytoplasm. It carries out the reaction L-histidine = trans-urocanate + NH4(+). It functions in the pathway amino-acid degradation; L-histidine degradation into L-glutamate; N-formimidoyl-L-glutamate from L-histidine: step 1/3. The sequence is that of Histidine ammonia-lyase from Burkholderia mallei (strain NCTC 10247).